The chain runs to 511 residues: MKDLFWHLVGIATGLKILLIPAYHSTDFEVHRNWLAITHSLPLNQWYVDATSEWTLDYPPFFAYFEWLLSQVAKYVDPRMLVVDNLNYESKATVYFQRLSVIVTDLVYVLGVRSCLGSLGLGRDTQQFFAASMLLLLNVGLIFVDHIHFQYNGLLFGILLLSIGSLIRQRFLWSAFAFAVLLNFKHIFLYMAPAFGVYLLRFYCLEQASVVSAVGAVVKLLVVGLTPFAVSFGPFWQQLPQVLSRLFPFKRGLTHAYWAPNFWALYNAADKLAAGVLKVQDGGASTTSGLVQEVRHSVLPAITPPVTFALTALFMLPILVKLFRSAKKQSPLVFLRAVVLCGCSSFVFGWHVHEKAILMVLLPLCLLTLVNREDARYAYVLGIAGYFSLFPLLFDADLYIPRYSLYMSYVAMMYGQLYRIFPGFRGFHTLEWLYMLGFMAIPLYEHLLSFLLHLDQRLPFLPLLLTSVYSALGVLYFFGAYYLYALGISWGKVPIASSTSAAAVKRKRKTK.

11 helical membrane-spanning segments follow: residues 4 to 24 (LFWH…PAYH), 94 to 112 (VYFQ…VLGV), 124 to 144 (DTQQ…LIFV), 151 to 171 (YNGL…RQRF), 210 to 230 (VVSA…PFAV), 300 to 320 (PAIT…PILV), 332 to 352 (LVFL…GWHV), 356 to 370 (AILM…LTLV), 377 to 394 (YAYV…PLLF), 432 to 452 (WLYM…SFLL), and 469 to 491 (YSAL…ISWG).

Belongs to the ALG6/ALG8 glucosyltransferase family.

Its subcellular location is the endoplasmic reticulum membrane. It catalyses the reaction an alpha-D-Glc-(1-&gt;3)-alpha-D-Man-(1-&gt;2)-alpha-D-Man-(1-&gt;2)-alpha-D-Man-(1-&gt;3)-[alpha-D-Man-(1-&gt;2)-alpha-D-Man-(1-&gt;3)-[alpha-D-Man-(1-&gt;2)-alpha-D-Man-(1-&gt;6)]-alpha-D-Man-(1-&gt;6)]-beta-D-Man-(1-&gt;4)-beta-D-GlcNAc-(1-&gt;4)-alpha-D-GlcNAc-diphospho-di-trans,poly-cis-dolichol + a di-trans,poly-cis-dolichyl beta-D-glucosyl phosphate = an alpha-D-Glc-(1-&gt;3)-alpha-D-Glc-(1-&gt;3)-alpha-D-Man-(1-&gt;2)-alpha-D-Man-(1-&gt;2)-alpha-D-Man-(1-&gt;3)-[alpha-D-Man-(1-&gt;2)-alpha-D-Man-(1-&gt;3)-[alpha-D-Man-(1-&gt;2)-alpha-D-Man-(1-&gt;6)]-alpha-D-Man-(1-&gt;6)]-beta-D-Man-(1-&gt;4)-beta-D-GlcNAc-(1-&gt;4)-alpha-D-GlcNAc-diphospho-di-trans,poly-cis-dolichol + a di-trans,poly-cis-dolichyl phosphate + H(+). It functions in the pathway protein modification; protein glycosylation. Adds the second glucose residue to the lipid-linked oligosaccharide precursor for N-linked glycosylation. Transfers glucose from dolichyl phosphate glucose (Dol-P-Glc) onto the lipid-linked oligosaccharide Glc(1)Man(9)GlcNAc(2)-PP-Dol. Functions in developmental processes such as germband extension, the apical constriction of mesoderm precursor cells and ventral furrow formation in early embryogenesis prior to gastrulation. Involved in the glycosylation and intracellular distribution of shg (E-cadherin). Function in cell intercalation in the lateral epidermis during germband extension may be due to its effect on shg. The protein is Probable dolichyl pyrophosphate Glc1Man9GlcNAc2 alpha-1,3-glucosyltransferase of Drosophila melanogaster (Fruit fly).